A 311-amino-acid chain; its full sequence is HPr kinase/phosphorylase (311 aa).

Residues H138 and K159 contribute to the active site. 153–160 (GKSGVGKS) lines the ATP pocket. Residue S160 participates in Mg(2+) binding. Residue D177 is the Proton acceptor; for phosphorylation activity. Proton donor; for dephosphorylation activity of the active site. Residues 201-210 (LEIRGLGIIN) are important for the catalytic mechanism of both phosphorylation and dephosphorylation. E202 serves as a coordination point for Mg(2+). The active site involves R243. Positions 264 to 269 (PVRPGR) are important for the catalytic mechanism of dephosphorylation.

The protein belongs to the HPrK/P family. In terms of assembly, homohexamer. The cofactor is Mg(2+).

It catalyses the reaction [HPr protein]-L-serine + ATP = [HPr protein]-O-phospho-L-serine + ADP + H(+). The enzyme catalyses [HPr protein]-O-phospho-L-serine + phosphate + H(+) = [HPr protein]-L-serine + diphosphate. Catalyzes the ATP- as well as the pyrophosphate-dependent phosphorylation of a specific serine residue in HPr, a phosphocarrier protein of the phosphoenolpyruvate-dependent sugar phosphotransferase system (PTS). HprK/P also catalyzes the pyrophosphate-producing, inorganic phosphate-dependent dephosphorylation (phosphorolysis) of seryl-phosphorylated HPr (P-Ser-HPr). The two antagonistic activities of HprK/P are regulated by several intracellular metabolites, which change their concentration in response to the absence or presence of rapidly metabolisable carbon sources (glucose, fructose, etc.) in the growth medium. Also phosphorylates/dephosphorylates the HPr-like catabolite repression protein crh on a specific serine residue. Therefore, by controlling the phosphorylation state of HPr and crh, HPrK/P is a sensor enzyme that plays a major role in the regulation of carbon metabolism and sugar transport: it mediates carbon catabolite repression (CCR), and regulates PTS-catalyzed carbohydrate uptake and inducer exclusion. The protein is HPr kinase/phosphorylase of Geobacillus sp. (strain WCH70).